The following is a 449-amino-acid chain: Exopolygalacturonase X-2 (449 aa).

Residues 1–24 form the signal peptide; that stretch reads MGFKRTIGLLLGILLALDQVSVLA. N-linked (GlcNAc...) asparagine glycosylation is found at asparagine 136, asparagine 172, and asparagine 208. Residues 240 to 261 form a PbH1 1 repeat; sequence SDNVVIQNSVINHDDDCVSFKP. The Proton donor role is filled by aspartate 254. Cysteines 256 and 273 form a disulfide. N-linked (GlcNAc...) asparagine glycosylation is found at asparagine 262 and asparagine 274. 2 PbH1 repeats span residues 263-283 and 294-315; these read STNI…SVGS and VSDL…RLKV. Histidine 277 is a catalytic residue. N-linked (GlcNAc...) asparagine glycans are attached at residues asparagine 301, asparagine 306, asparagine 340, and asparagine 365. Residues cysteine 403 and cysteine 409 are joined by a disulfide bond. Residues asparagine 416 and asparagine 421 are each glycosylated (N-linked (GlcNAc...) asparagine).

It belongs to the glycosyl hydrolase 28 family.

The protein localises to the secreted. The enzyme catalyses [(1-&gt;4)-alpha-D-galacturonosyl](n) + H2O = alpha-D-galacturonate + [(1-&gt;4)-alpha-D-galacturonosyl](n-1). Its function is as follows. Specific in hydrolyzing the terminal glycosidic bond of polygalacturonic acid and oligogalacturonates. The polypeptide is Exopolygalacturonase X-2 (pgaX-2) (Emericella nidulans (strain FGSC A4 / ATCC 38163 / CBS 112.46 / NRRL 194 / M139) (Aspergillus nidulans)).